A 351-amino-acid chain; its full sequence is Hydroxymethylglutaryl-CoA synthase (351 aa).

Asp28 contacts (3S)-3-hydroxy-3-methylglutaryl-CoA. The Proton donor/acceptor role is filled by Glu80. Residues Cys112 and Thr153 each contribute to the (3S)-3-hydroxy-3-methylglutaryl-CoA site. The active-site Acyl-thioester intermediate is the Cys112. Arg199 is a binding site for CoA. (3S)-3-hydroxy-3-methylglutaryl-CoA contacts are provided by Thr201 and His234. Residue His234 is the Proton donor/acceptor of the active site. Lys239 provides a ligand contact to CoA. (3S)-3-hydroxy-3-methylglutaryl-CoA is bound by residues Arg243, Asn266, and Ser296.

It belongs to the thiolase-like superfamily. Archaeal HMG-CoA synthase family. In terms of assembly, interacts with acetoacetyl-CoA thiolase that catalyzes the precedent step in the pathway and with a DUF35 protein. The acetoacetyl-CoA thiolase/HMG-CoA synthase complex channels the intermediate via a fused CoA-binding site, which allows for efficient coupling of the endergonic thiolase reaction with the exergonic HMGCS reaction.

It carries out the reaction acetoacetyl-CoA + acetyl-CoA + H2O = (3S)-3-hydroxy-3-methylglutaryl-CoA + CoA + H(+). It functions in the pathway metabolic intermediate biosynthesis; (R)-mevalonate biosynthesis; (R)-mevalonate from acetyl-CoA: step 2/3. Its function is as follows. Catalyzes the condensation of acetyl-CoA with acetoacetyl-CoA to form 3-hydroxy-3-methylglutaryl-CoA (HMG-CoA). Functions in the mevalonate (MVA) pathway leading to isopentenyl diphosphate (IPP), a key precursor for the biosynthesis of isoprenoid compounds that are building blocks of archaeal membrane lipids. This is Hydroxymethylglutaryl-CoA synthase from Picrophilus torridus (strain ATCC 700027 / DSM 9790 / JCM 10055 / NBRC 100828 / KAW 2/3).